A 190-amino-acid polypeptide reads, in one-letter code: Putative CRISPR system CMR subunit Cmr7 2 (190 aa).

Belongs to the CRISPR system Cmr7 family. As to quaternary structure, homodimer.

CRISPR (clustered regularly interspaced short palindromic repeat) is an adaptive immune system that provides protection against mobile genetic elements (viruses, transposable elements and conjugative plasmids). CRISPR clusters contain spacers, sequences complementary to antecedent mobile elements, and target invading nucleic acids. CRISPR clusters are transcribed and processed into CRISPR RNA (crRNA). The sequence is that of Putative CRISPR system CMR subunit Cmr7 2 (cmr7b) from Saccharolobus solfataricus (strain ATCC 35092 / DSM 1617 / JCM 11322 / P2) (Sulfolobus solfataricus).